The primary structure comprises 214 residues: Thymidylate kinase (214 aa).

14-21 (GLEGAGKT) is an ATP binding site.

This sequence belongs to the thymidylate kinase family.

The enzyme catalyses dTMP + ATP = dTDP + ADP. Phosphorylation of dTMP to form dTDP in both de novo and salvage pathways of dTTP synthesis. This Mannheimia succiniciproducens (strain KCTC 0769BP / MBEL55E) protein is Thymidylate kinase.